Consider the following 225-residue polypeptide: Octanoyltransferase (225 aa).

Residues 44–219 enclose the BPL/LPL catalytic domain; it reads RETPDEIWLL…NFIAQLTHRI (176 aa). Residues 83-90, 150-152, and 163-165 each bind substrate; these read RGGQITYH, SLG, and GIA. Cys-181 (acyl-thioester intermediate) is an active-site residue.

The protein belongs to the LipB family.

It is found in the cytoplasm. The enzyme catalyses octanoyl-[ACP] + L-lysyl-[protein] = N(6)-octanoyl-L-lysyl-[protein] + holo-[ACP] + H(+). The protein operates within protein modification; protein lipoylation via endogenous pathway; protein N(6)-(lipoyl)lysine from octanoyl-[acyl-carrier-protein]: step 1/2. Catalyzes the transfer of endogenously produced octanoic acid from octanoyl-acyl-carrier-protein onto the lipoyl domains of lipoate-dependent enzymes. Lipoyl-ACP can also act as a substrate although octanoyl-ACP is likely to be the physiological substrate. The sequence is that of Octanoyltransferase from Nitrosomonas eutropha (strain DSM 101675 / C91 / Nm57).